Reading from the N-terminus, the 420-residue chain is Mitogen-activated protein kinase HOG2 (420 aa).

Residues V29 to V37 and K52 contribute to the ATP site. D144 acts as the Proton acceptor in catalysis. T174 carries the post-translational modification Phosphothreonine. The short motif at T174–Y176 is the TXY element. At Y176 the chain carries Phosphotyrosine. The tract at residues A372–S394 is disordered.

It belongs to the protein kinase superfamily. Ser/Thr protein kinase family. MAP kinase subfamily. HOG1 sub-subfamily. Requires Mg(2+) as cofactor. In terms of processing, dually phosphorylated on Thr-174 and Tyr-176, which activates the enzyme.

It is found in the cytoplasm. The protein localises to the nucleus. The enzyme catalyses L-seryl-[protein] + ATP = O-phospho-L-seryl-[protein] + ADP + H(+). The catalysed reaction is L-threonyl-[protein] + ATP = O-phospho-L-threonyl-[protein] + ADP + H(+). Activated by tyrosine and threonine phosphorylation. Functionally, mitogen-activated protein kinase involved in a signal transduction pathway that is activated by changes in the osmolarity of the extracellular environment. Controls osmotic regulation of transcription of target genes. The polypeptide is Mitogen-activated protein kinase HOG2 (HOG2) (Zygosaccharomyces rouxii).